Here is an 81-residue protein sequence, read N- to C-terminus: Photosystem I iron-sulfur center (81 aa).

2 consecutive 4Fe-4S ferredoxin-type domains span residues 2–31 (SHSV…MIPW) and 39–68 (IASA…VRVY). Positions 11, 14, 17, 21, 48, 51, 54, and 58 each coordinate [4Fe-4S] cluster.

In terms of assembly, the eukaryotic PSI reaction center is composed of at least 11 subunits. The cofactor is [4Fe-4S] cluster.

It localises to the plastid thylakoid membrane. It carries out the reaction reduced [plastocyanin] + hnu + oxidized [2Fe-2S]-[ferredoxin] = oxidized [plastocyanin] + reduced [2Fe-2S]-[ferredoxin]. Apoprotein for the two 4Fe-4S centers FA and FB of photosystem I (PSI); essential for photochemical activity. FB is the terminal electron acceptor of PSI, donating electrons to ferredoxin. The C-terminus interacts with PsaA/B/D and helps assemble the protein into the PSI complex. Required for binding of PsaD and PsaE to PSI. PSI is a plastocyanin-ferredoxin oxidoreductase, converting photonic excitation into a charge separation, which transfers an electron from the donor P700 chlorophyll pair to the spectroscopically characterized acceptors A0, A1, FX, FA and FB in turn. This Cuscuta obtusiflora (Peruvian dodder) protein is Photosystem I iron-sulfur center.